The primary structure comprises 165 residues: 2S seed storage protein 5 (165 aa).

A signal peptide spans 1-20 (MAKLILVFATLALFILLANA). 2 consecutive propeptides follow at residues 21–37 (SIYR…DVSN) and 71–89 (YEAD…DDEN).

Belongs to the 2S seed storage albumins family. The mature protein consists of a small and a large chain linked by disulfide bonds.

In terms of biological role, this is a 2S seed storage protein. The protein is 2S seed storage protein 5 (SESA5) of Arabidopsis thaliana (Mouse-ear cress).